Consider the following 151-residue polypeptide: Small ribosomal subunit protein uS15 (151 aa).

The protein belongs to the universal ribosomal protein uS15 family.

The polypeptide is Small ribosomal subunit protein uS15 (RPS13) (Zea mays (Maize)).